The following is a 351-amino-acid chain: Prostaglandin reductase 2 (351 aa).

Substrate is bound at residue 99–100; sequence FY. Residues 165 to 168, Lys192, Tyr208, Asn231, 253 to 259, 287 to 289, and Asn337 each bind NADP(+); these read GACG, CGQISQY, and FLV. Residue 288-290 coordinates substrate; the sequence is LVL.

It belongs to the NADP-dependent oxidoreductase L4BD family. As to quaternary structure, monomer.

It is found in the cytoplasm. It carries out the reaction 13,14-dihydro-15-oxo-prostaglandin E2 + NAD(+) = 15-oxoprostaglandin E2 + NADH + H(+). The catalysed reaction is 13,14-dihydro-15-oxo-prostaglandin E2 + NADP(+) = 15-oxoprostaglandin E2 + NADPH + H(+). It catalyses the reaction 13,14-dihydro-15-oxo-PGF2alpha + NADP(+) = 15-oxoprostaglandin F2alpha + NADPH + H(+). The enzyme catalyses 13,14-dihydro-15-oxo-prostaglandin E1 + NADP(+) = 15-oxoprostaglandin E1 + NADPH + H(+). It carries out the reaction 13,14-dihydro-15-oxo-prostaglandin F1alpha + NADP(+) = 15-oxoprostaglandin F1alpha + NADPH + H(+). Functionally, functions as 15-oxo-prostaglandin 13-reductase and acts on 15-keto-PGE1, 15-keto-PGE2, 15-keto-PGE1-alpha and 15-keto-PGE2-alpha with highest activity towards 15-keto-PGE2. Overexpression represses transcriptional activity of PPARG and inhibits adipocyte differentiation. In Bos taurus (Bovine), this protein is Prostaglandin reductase 2 (PTGR2).